We begin with the raw amino-acid sequence, 292 residues long: N-acetylneuraminate lyase (292 aa).

Aceneuramate is bound by residues serine 47 and threonine 48. Tyrosine 136 serves as the catalytic Proton donor. Lysine 164 serves as the catalytic Schiff-base intermediate with substrate. Aceneuramate is bound by residues threonine 166, glycine 188, aspartate 190, glutamate 191, and serine 207.

Belongs to the DapA family. NanA subfamily. In terms of assembly, homotetramer.

Its subcellular location is the cytoplasm. It carries out the reaction aceneuramate = aldehydo-N-acetyl-D-mannosamine + pyruvate. It functions in the pathway amino-sugar metabolism; N-acetylneuraminate degradation; D-fructose 6-phosphate from N-acetylneuraminate: step 1/5. Catalyzes the reversible aldol cleavage of N-acetylneuraminic acid (sialic acid; Neu5Ac) to form pyruvate and N-acetylmannosamine (ManNAc) via a Schiff base intermediate. The chain is N-acetylneuraminate lyase from Histophilus somni (strain 129Pt) (Haemophilus somnus).